A 337-amino-acid chain; its full sequence is Dimethyladenosine transferase 1, mitochondrial (337 aa).

The N-terminal 84 residues, 1 to 84 (MSQVTARVLN…RSILRRQPQR (84 aa)), are a transit peptide targeting the mitochondrion. S-adenosyl-L-methionine is bound by residues 38–41 (QNFL), Asn39, Leu41, Gly67, Glu89, Asp118, and Asn140.

This sequence belongs to the class I-like SAM-binding methyltransferase superfamily. rRNA adenine N(6)-methyltransferase family. KsgA subfamily.

The protein localises to the mitochondrion. Probable S-adenosyl-L-methionine-dependent methyltransferase which specifically dimethylates mitochondrial 12S rRNA at the conserved stem loop. This Drosophila pseudoobscura pseudoobscura (Fruit fly) protein is Dimethyladenosine transferase 1, mitochondrial (mtTFB1).